A 502-amino-acid chain; its full sequence is tRNA-2-methylthio-N(6)-dimethylallyladenosine synthase (502 aa).

One can recognise an MTTase N-terminal domain in the interval 12 to 129; it reads RTYQVRTYGC…LPVLLERARH (118 aa). 6 residues coordinate [4Fe-4S] cluster: Cys-21, Cys-58, Cys-92, Cys-166, Cys-170, and Cys-173. One can recognise a Radical SAM core domain in the interval 152–383; it reads RESTYAGWVS…ACVEEITWAE (232 aa). One can recognise a TRAM domain in the interval 385–455; it reads RRLVGETVEV…PHHLNADGEP (71 aa). The interval 451–502 is disordered; sequence ADGEPLAHRRTPAGDAAEAGRRPRTAGVSLGLPTVGAPPSPVPPAASSACAC.

Belongs to the methylthiotransferase family. MiaB subfamily. Monomer. Requires [4Fe-4S] cluster as cofactor.

The protein localises to the cytoplasm. The catalysed reaction is N(6)-dimethylallyladenosine(37) in tRNA + (sulfur carrier)-SH + AH2 + 2 S-adenosyl-L-methionine = 2-methylsulfanyl-N(6)-dimethylallyladenosine(37) in tRNA + (sulfur carrier)-H + 5'-deoxyadenosine + L-methionine + A + S-adenosyl-L-homocysteine + 2 H(+). Its function is as follows. Catalyzes the methylthiolation of N6-(dimethylallyl)adenosine (i(6)A), leading to the formation of 2-methylthio-N6-(dimethylallyl)adenosine (ms(2)i(6)A) at position 37 in tRNAs that read codons beginning with uridine. This Salinispora arenicola (strain CNS-205) protein is tRNA-2-methylthio-N(6)-dimethylallyladenosine synthase.